The following is a 263-amino-acid chain: 3-methyl-2-oxobutanoate hydroxymethyltransferase (263 aa).

Mg(2+) is bound by residues D46 and D85. Residues 46 to 47 (DS), D85, and K115 each bind 3-methyl-2-oxobutanoate. Residue E117 coordinates Mg(2+). E180 (proton acceptor) is an active-site residue.

This sequence belongs to the PanB family. Homodecamer; pentamer of dimers. The cofactor is Mg(2+).

The protein resides in the cytoplasm. It catalyses the reaction 3-methyl-2-oxobutanoate + (6R)-5,10-methylene-5,6,7,8-tetrahydrofolate + H2O = 2-dehydropantoate + (6S)-5,6,7,8-tetrahydrofolate. Its pathway is cofactor biosynthesis; (R)-pantothenate biosynthesis; (R)-pantoate from 3-methyl-2-oxobutanoate: step 1/2. Functionally, catalyzes the reversible reaction in which hydroxymethyl group from 5,10-methylenetetrahydrofolate is transferred onto alpha-ketoisovalerate to form ketopantoate. In Corynebacterium diphtheriae (strain ATCC 700971 / NCTC 13129 / Biotype gravis), this protein is 3-methyl-2-oxobutanoate hydroxymethyltransferase.